Reading from the N-terminus, the 382-residue chain is Manganese peroxidase H4 (382 aa).

Positions methionine 1–serine 24 are cleaved as a signal peptide. 5 disulfide bridges follow: cysteine 27–cysteine 39, cysteine 38–cysteine 313, cysteine 57–cysteine 141, cysteine 277–cysteine 344, and cysteine 366–cysteine 373. Glutamate 59 and glutamate 63 together coordinate Mn(2+). Residue histidine 70 is the Proton acceptor of the active site. Ca(2+) is bound by residues aspartate 71, glycine 86, aspartate 88, and serine 90. N-linked (GlcNAc...) asparagine glycosylation is found at asparagine 100 and asparagine 155. Histidine 197 lines the heme b pocket. A Ca(2+)-binding site is contributed by threonine 198. Aspartate 203 contacts Mn(2+). Residues aspartate 215, threonine 217, threonine 220, and aspartate 222 each contribute to the Ca(2+) site. Residue asparagine 241 is glycosylated (N-linked (GlcNAc...) asparagine).

Belongs to the peroxidase family. Ligninase subfamily. Heme b serves as cofactor. It depends on Ca(2+) as a cofactor.

It localises to the secreted. The enzyme catalyses 2 Mn(2+) + H2O2 + 2 H(+) = 2 Mn(3+) + 2 H2O. In terms of biological role, catalyzes the oxidation of Mn(2+) to Mn(3+). The latter, acting as a diffusible redox mediator, is capable of oxidizing a variety of lignin compounds. The chain is Manganese peroxidase H4 from Phanerodontia chrysosporium (White-rot fungus).